Consider the following 218-residue polypeptide: Uracil-DNA glycosylase (218 aa).

Asp-68 functions as the Proton acceptor in the catalytic mechanism.

Belongs to the uracil-DNA glycosylase (UDG) superfamily. UNG family. As to quaternary structure, homodimer. Interacts with protein OPG148. Component of the Uracil-DNA glycosylase(UDG)-OPG148-polymerase complex; OPG148 and UDG form a heterodimeric processivity factor that associates with OPG71 to form the processive polymerase holoenzyme.

It catalyses the reaction Hydrolyzes single-stranded DNA or mismatched double-stranded DNA and polynucleotides, releasing free uracil.. In terms of biological role, plays an essential role in viral replication as a component of the DNA polymerase processivity factor. Excises uracil residues from the DNA which can arise as a result of misincorporation of dUMP residues by DNA polymerase or due to deamination of cytosine. This is Uracil-DNA glycosylase (OPG116) from Bos taurus (Bovine).